We begin with the raw amino-acid sequence, 205 residues long: Probable GTP-binding protein EngB (205 aa).

An EngB-type G domain is found at 29–203 (QGAEIAFIGR…KAVLSQWFRS (175 aa)). Residues 37–44 (GRSNAGKS), 64–68 (GRTQM), 82–85 (DLPG), 149–152 (TKSD), and 182–184 (FSS) each bind GTP. Mg(2+) is bound by residues Ser-44 and Thr-66.

The protein belongs to the TRAFAC class TrmE-Era-EngA-EngB-Septin-like GTPase superfamily. EngB GTPase family. It depends on Mg(2+) as a cofactor.

Necessary for normal cell division and for the maintenance of normal septation. The sequence is that of Probable GTP-binding protein EngB from Coxiella burnetii (strain RSA 493 / Nine Mile phase I).